The chain runs to 175 residues: NADH-quinone oxidoreductase subunit I (175 aa).

4Fe-4S ferredoxin-type domains are found at residues lysine 64–aspartate 93 and serine 110–glutamate 139. Cysteine 73, cysteine 76, cysteine 79, cysteine 83, cysteine 119, cysteine 122, cysteine 125, and cysteine 129 together coordinate [4Fe-4S] cluster.

Belongs to the complex I 23 kDa subunit family. As to quaternary structure, NDH-1 is composed of 14 different subunits. Subunits NuoA, H, J, K, L, M, N constitute the membrane sector of the complex. Requires [4Fe-4S] cluster as cofactor.

It localises to the cell inner membrane. It catalyses the reaction a quinone + NADH + 5 H(+)(in) = a quinol + NAD(+) + 4 H(+)(out). In terms of biological role, NDH-1 shuttles electrons from NADH, via FMN and iron-sulfur (Fe-S) centers, to quinones in the respiratory chain. The immediate electron acceptor for the enzyme in this species is believed to be ubiquinone. Couples the redox reaction to proton translocation (for every two electrons transferred, four hydrogen ions are translocated across the cytoplasmic membrane), and thus conserves the redox energy in a proton gradient. In Cytophaga hutchinsonii (strain ATCC 33406 / DSM 1761 / CIP 103989 / NBRC 15051 / NCIMB 9469 / D465), this protein is NADH-quinone oxidoreductase subunit I.